The sequence spans 146 residues: Anti-sigma F factor (146 aa).

This sequence belongs to the anti-sigma-factor family.

The catalysed reaction is L-seryl-[protein] + ATP = O-phospho-L-seryl-[protein] + ADP + H(+). It catalyses the reaction L-threonyl-[protein] + ATP = O-phospho-L-threonyl-[protein] + ADP + H(+). In terms of biological role, binds to sigma F and blocks its ability to form an RNA polymerase holoenzyme (E-sigma F). Phosphorylates SpoIIAA on a serine residue. This phosphorylation may enable SpoIIAA to act as an anti-anti-sigma factor that counteracts SpoIIAB and thus releases sigma F from inhibition. The chain is Anti-sigma F factor from Bacillus cytotoxicus (strain DSM 22905 / CIP 110041 / 391-98 / NVH 391-98).